Reading from the N-terminus, the 556-residue chain is Membrane protein insertase YidC (556 aa).

The next 5 membrane-spanning stretches (helical) occupy residues 6 to 26 (IVLY…WQID), 332 to 352 (LDLT…FSLM), 358 to 378 (VVGN…LAFY), 428 to 448 (LGGC…YWVL), and 501 to 521 (VMMF…SGLV).

It belongs to the OXA1/ALB3/YidC family. Type 1 subfamily. In terms of assembly, interacts with the Sec translocase complex via SecD. Specifically interacts with transmembrane segments of nascent integral membrane proteins during membrane integration.

It localises to the cell inner membrane. Functionally, required for the insertion and/or proper folding and/or complex formation of integral membrane proteins into the membrane. Involved in integration of membrane proteins that insert both dependently and independently of the Sec translocase complex, as well as at least some lipoproteins. Aids folding of multispanning membrane proteins. The protein is Membrane protein insertase YidC of Legionella pneumophila (strain Lens).